The primary structure comprises 517 residues: Membrane-bound lytic murein transglycosylase F (517 aa).

The first 32 residues, 1-32, serve as a signal peptide directing secretion; it reads MKKFKINYLLIGIVTLLLAAALWPSIPWFGKA. Residues 33-269 are non-LT domain; that stretch reads ENRIAAIQSR…RLEEKYLGHG (237 aa). Positions 270 to 517 are LT domain; that stretch reads GDFDYVDTRS…PNTLVQAPRR (248 aa). The active site involves glutamate 314.

The protein in the N-terminal section; belongs to the bacterial solute-binding protein 3 family. This sequence in the C-terminal section; belongs to the transglycosylase Slt family.

It localises to the cell outer membrane. It carries out the reaction Exolytic cleavage of the (1-&gt;4)-beta-glycosidic linkage between N-acetylmuramic acid (MurNAc) and N-acetylglucosamine (GlcNAc) residues in peptidoglycan, from either the reducing or the non-reducing ends of the peptidoglycan chains, with concomitant formation of a 1,6-anhydrobond in the MurNAc residue.. Functionally, murein-degrading enzyme that degrades murein glycan strands and insoluble, high-molecular weight murein sacculi, with the concomitant formation of a 1,6-anhydromuramoyl product. Lytic transglycosylases (LTs) play an integral role in the metabolism of the peptidoglycan (PG) sacculus. Their lytic action creates space within the PG sacculus to allow for its expansion as well as for the insertion of various structures such as secretion systems and flagella. This chain is Membrane-bound lytic murein transglycosylase F, found in Enterobacter sp. (strain 638).